The following is a 172-amino-acid chain: Myosin regulatory light chain 12B (172 aa).

The segment covering 1–16 (MSSKKAKTKTTKKRPQ) has biased composition (basic residues). Residues 1 to 20 (MSSKKAKTKTTKKRPQRATS) are disordered. Phosphothreonine; by MLCK and ZIPK/DAPK3 is present on Thr-19. The residue at position 20 (Ser-20) is a Phosphoserine; by MLCK and ZIPK/DAPK3. EF-hand domains follow at residues 29 to 64 (SQIQ…LGKN), 98 to 133 (DPED…MGDR), and 134 to 169 (FTDE…GAKD). Ca(2+)-binding residues include Asp-42, Asn-44, Asp-46, and Asp-53.

Myosin is a hexamer of 2 heavy chains and 4 light chains: interacts with myosin heavy chain MYO19. Phosphorylation increases the actin-activated myosin ATPase activity and thereby regulates the contractile activity. It is required to generate the driving force in the migration of the cells but not necessary for localization of myosin-2 at the leading edge. Phosphorylation is reduced following epigallocatechin-3-O-gallate treatment.

In terms of biological role, myosin regulatory subunit that plays an important role in regulation of both smooth muscle and nonmuscle cell contractile activity via its phosphorylation. Phosphorylation triggers actin polymerization in vascular smooth muscle. Implicated in cytokinesis, receptor capping, and cell locomotion. The sequence is that of Myosin regulatory light chain 12B (Myl12b) from Rattus norvegicus (Rat).